A 941-amino-acid chain; its full sequence is Pre-mRNA-processing factor 6 (941 aa).

The disordered stretch occupies residues 1 to 79 (MNKKKKPFLG…DEDLNDTNYD (79 aa)). The segment covering 39-65 (DANDPVDDRHAPPGKRTVGDQMKKNQA) has biased composition (basic and acidic residues). The segment covering 66–78 (ADDDDEDLNDTNY) has biased composition (acidic residues). Phosphoserine is present on S143. Phosphothreonine occurs at positions 180, 266, and 275. The residue at position 279 (S279) is a Phosphoserine. HAT repeat units follow at residues 384-416 (TDIRAKKRVLRKALEHVPNSVRLWKAAVELEEP), 418-444 (DARIMLSRAVECCPTSVELWLALARLE), 445-476 (TYENARKVLNKARENIPTDRHIWITAAKLEEA), 554-586 (NALECARAIYAYALQVFPSKKSVWLRAAYFGKN), 588-620 (GTRESLEALLQRAVAHCPKAEVLWLMGAKSKWL), 622-654 (GDVPAARSILALAFQANPNSEEIWLAAVKLESE), 689-721 (DNIRAAQDLCEEALRHYEDFPKLWMMKGQIEEQ), 723-755 (EMMEKAREAYNQGLKKCPHSTPLWLLLSRLEEK), and 855-887 (RKITKAREWFHRTVKIDSDLGDAWAFFYKFELQ).

Identified in the spliceosome B complex. Identified in the spliceosome C complex. Associates with the U5 snRNP particle. Component of the U4/U6-U5 tri-snRNP complex composed of the U4, U6 and U5 snRNAs and at least PRPF3, PRPF4, PRPF6, PRPF8, PRPF31, SNRNP200, TXNL4A, SNRNP40, DDX23, CD2BP2, PPIH, SNU13, EFTUD2, SART1 and USP39, LSm proteins LSm2-8 and Sm proteins. Interacts with ARAF1. Interacts with AR and NR3C1, but not ESR1, independently of the presence of hormones. Interacts with USH1G. Phosphorylated by PRP4K during spliceosome assembly.

It is found in the nucleus. The protein resides in the nucleoplasm. It localises to the nucleus speckle. Involved in pre-mRNA splicing as component of the U4/U6-U5 tri-snRNP complex, one of the building blocks of the spliceosome. Enhances dihydrotestosterone-induced transactivation activity of AR, as well as dexamethasone-induced transactivation activity of NR3C1, but does not affect estrogen-induced transactivation. This Pongo abelii (Sumatran orangutan) protein is Pre-mRNA-processing factor 6 (PRPF6).